Consider the following 208-residue polypeptide: Large ribosomal subunit protein bL25 (208 aa).

The tract at residues 1-20 is disordered; it reads MANHQIKAQRRKDEGKGASR.

The protein belongs to the bacterial ribosomal protein bL25 family. CTC subfamily. In terms of assembly, part of the 50S ribosomal subunit; part of the 5S rRNA/L5/L18/L25 subcomplex. Contacts the 5S rRNA. Binds to the 5S rRNA independently of L5 and L18.

Functionally, this is one of the proteins that binds to the 5S RNA in the ribosome where it forms part of the central protuberance. This chain is Large ribosomal subunit protein bL25, found in Xylella fastidiosa (strain 9a5c).